We begin with the raw amino-acid sequence, 375 residues long: Homoserine O-succinyltransferase (375 aa).

Residues 48-358 (NAVLVCHALS…PAGHDSFLLD (311 aa)) enclose the AB hydrolase-1 domain. The active-site Nucleophile is the S154. R224 contributes to the substrate binding site. Residues D319 and H352 contribute to the active site. D353 provides a ligand contact to substrate.

Belongs to the AB hydrolase superfamily. MetX family. As to quaternary structure, homodimer.

It is found in the cytoplasm. The enzyme catalyses L-homoserine + succinyl-CoA = O-succinyl-L-homoserine + CoA. It participates in amino-acid biosynthesis; L-methionine biosynthesis via de novo pathway; O-succinyl-L-homoserine from L-homoserine: step 1/1. Functionally, transfers a succinyl group from succinyl-CoA to L-homoserine, forming succinyl-L-homoserine. This Azoarcus sp. (strain BH72) protein is Homoserine O-succinyltransferase.